Here is a 548-residue protein sequence, read N- to C-terminus: MEDDLFQLRHLPVVKFRRTGESSKSEDDNISGEHEIQIGPVQTELEAVELEDGTTVPKEFANPTDDTFMVEDAVEAIGFGKFQWKLSMLTGLAWMADAMEMMILSILAPQLHCEWRLPSWQVALLTSVVFIGMMASSSLWGNVSDQYGRRTGLKISVIWTLYYGILSAFAPVYSWILVLRGLVGFGIGGVPQSVTLYAEFLPMKSRAKCILLIEIFWALGTVFEVLLAIFVMPTLGWRWLLILSALPLMLFAILCFWLPESARYEVLSGNQEKALATLKRIATENGAPMPLGKLIVSRQEDRGKIRDLFSPQFRCTTLLLWFIWFSNAFSYYGLVLLTTELFQAGDVCSISNQRKAVKPKCSLACEYLTVEDYTDLLWTTLSEFPGLLVTLWIIDRVGRKKTMAICFIIFSFSALLLFLCVGRNVLTVFLFIARAFISGGFQAAYVYTPEVYPTATRALGLGTCSGMARVGALITPFIAQVMLESSIYLTVLVYSGCCVLAAVASCFLPIETKGRGLQESSHREWGQEMVGRGTHNVGATPSHSGSQE.

Over 1–87 (MEDDLFQLRH…GFGKFQWKLS (87 aa)) the chain is Cytoplasmic. A helical transmembrane segment spans residues 88–108 (MLTGLAWMADAMEMMILSILA). Residues 109-119 (PQLHCEWRLPS) are Vesicular-facing. A helical membrane pass occupies residues 120–140 (WQVALLTSVVFIGMMASSSLW). At 141 to 156 (GNVSDQYGRRTGLKIS) the chain is on the cytoplasmic side. A helical transmembrane segment spans residues 157–177 (VIWTLYYGILSAFAPVYSWIL). The Vesicular segment spans residues 178–180 (VLR). Residues 181-201 (GLVGFGIGGVPQSVTLYAEFL) traverse the membrane as a helical segment. Residues 202–209 (PMKSRAKC) lie on the Cytoplasmic side of the membrane. A helical membrane pass occupies residues 210–230 (ILLIEIFWALGTVFEVLLAIF). Residues 231-238 (VMPTLGWR) are Vesicular-facing. Residues 239-259 (WLLILSALPLMLFAILCFWLP) form a helical membrane-spanning segment. Residues 260 to 316 (ESARYEVLSGNQEKALATLKRIATENGAPMPLGKLIVSRQEDRGKIRDLFSPQFRCT) lie on the Cytoplasmic side of the membrane. A helical membrane pass occupies residues 317-337 (TLLLWFIWFSNAFSYYGLVLL). The Vesicular segment spans residues 338–373 (TTELFQAGDVCSISNQRKAVKPKCSLACEYLTVEDY). Residues 374–394 (TDLLWTTLSEFPGLLVTLWII) form a helical membrane-spanning segment. At 395-401 (DRVGRKK) the chain is on the cytoplasmic side. The helical transmembrane segment at 402–422 (TMAICFIIFSFSALLLFLCVG) threads the bilayer. At 423 to 424 (RN) the chain is on the vesicular side. The helical transmembrane segment at 425 to 445 (VLTVFLFIARAFISGGFQAAY) threads the bilayer. Residues 446-457 (VYTPEVYPTATR) lie on the Cytoplasmic side of the membrane. A helical transmembrane segment spans residues 458 to 478 (ALGLGTCSGMARVGALITPFI). The Vesicular portion of the chain corresponds to 479–486 (AQVMLESS). Residues 487-507 (IYLTVLVYSGCCVLAAVASCF) form a helical membrane-spanning segment. Over 508–548 (LPIETKGRGLQESSHREWGQEMVGRGTHNVGATPSHSGSQE) the chain is Cytoplasmic. Residues 519-548 (ESSHREWGQEMVGRGTHNVGATPSHSGSQE) are disordered. A compositionally biased stretch (polar residues) spans 537 to 548 (VGATPSHSGSQE).

This sequence belongs to the major facilitator superfamily. In terms of tissue distribution, detected in embryonic trigeminal ganglion and spinal cord.

It localises to the cytoplasmic vesicle. The protein localises to the secretory vesicle. It is found in the synaptic vesicle membrane. The sequence is that of Synaptic vesicle 2-related protein (svop) from Xenopus laevis (African clawed frog).